The sequence spans 147 residues: UPF0306 protein KPN78578_35330 (147 aa).

This sequence belongs to the UPF0306 family.

This chain is UPF0306 protein KPN78578_35330, found in Klebsiella pneumoniae subsp. pneumoniae (strain ATCC 700721 / MGH 78578).